The primary structure comprises 234 residues: 7-cyano-7-deazaguanine synthase (234 aa).

13 to 23 is a binding site for ATP; sequence LSGGQDSTTCL. C193, C201, C204, and C207 together coordinate Zn(2+).

It belongs to the QueC family. Zn(2+) is required as a cofactor.

It carries out the reaction 7-carboxy-7-deazaguanine + NH4(+) + ATP = 7-cyano-7-deazaguanine + ADP + phosphate + H2O + H(+). Its pathway is purine metabolism; 7-cyano-7-deazaguanine biosynthesis. Catalyzes the ATP-dependent conversion of 7-carboxy-7-deazaguanine (CDG) to 7-cyano-7-deazaguanine (preQ(0)). This is 7-cyano-7-deazaguanine synthase from Chromobacterium violaceum (strain ATCC 12472 / DSM 30191 / JCM 1249 / CCUG 213 / NBRC 12614 / NCIMB 9131 / NCTC 9757 / MK).